The primary structure comprises 444 residues: Ribosomal protein uS12 methylthiotransferase RimO (444 aa).

An MTTase N-terminal domain is found at 3-119; that stretch reads IKIGLVSLGC…IARAVRRVLE (117 aa). Residues Cys12, Cys48, Cys82, Cys156, Cys160, and Cys163 each contribute to the [4Fe-4S] cluster site. A Radical SAM core domain is found at 142-372; it reads ATPPYTAYLK…MMLQQEISLQ (231 aa). The 70-residue stretch at 375–444 folds into the TRAM domain; sequence LKRVGEVIEV…EYDLTGETVL (70 aa).

Belongs to the methylthiotransferase family. RimO subfamily. [4Fe-4S] cluster is required as a cofactor.

The protein resides in the cytoplasm. The catalysed reaction is L-aspartate(89)-[ribosomal protein uS12]-hydrogen + (sulfur carrier)-SH + AH2 + 2 S-adenosyl-L-methionine = 3-methylsulfanyl-L-aspartate(89)-[ribosomal protein uS12]-hydrogen + (sulfur carrier)-H + 5'-deoxyadenosine + L-methionine + A + S-adenosyl-L-homocysteine + 2 H(+). Catalyzes the methylthiolation of an aspartic acid residue of ribosomal protein uS12. This chain is Ribosomal protein uS12 methylthiotransferase RimO, found in Pelotomaculum thermopropionicum (strain DSM 13744 / JCM 10971 / SI).